The chain runs to 461 residues: Photosystem II CP43 reaction center protein (461 aa).

A propeptide spanning residues 1–2 (ME) is cleaved from the precursor. Thr3 carries the post-translational modification N-acetylthreonine. Residue Thr3 is modified to Phosphothreonine. Helical transmembrane passes span 57-81 (LFEV…PHLA), 122-143 (LIGP…KDKN), 166-188 (KAMY…RIIT), 243-263 (QPWA…LSYS), and 279-300 (WFNN…ASQS). [CaMn4O5] cluster is bound at residue Glu355. Residues 435-459 (RARAAAAGFEKGIDRLTEPVLSLKP) traverse the membrane as a helical segment.

The protein belongs to the PsbB/PsbC family. PsbC subfamily. As to quaternary structure, PSII is composed of 1 copy each of membrane proteins PsbA, PsbB, PsbC, PsbD, PsbE, PsbF, PsbH, PsbI, PsbJ, PsbK, PsbL, PsbM, PsbT, PsbX, PsbY, PsbZ, Psb30/Ycf12, at least 3 peripheral proteins of the oxygen-evolving complex and a large number of cofactors. It forms dimeric complexes. Binds multiple chlorophylls and provides some of the ligands for the Ca-4Mn-5O cluster of the oxygen-evolving complex. It may also provide a ligand for a Cl- that is required for oxygen evolution. PSII binds additional chlorophylls, carotenoids and specific lipids. serves as cofactor.

It is found in the plastid. Its subcellular location is the chloroplast thylakoid membrane. One of the components of the core complex of photosystem II (PSII). It binds chlorophyll and helps catalyze the primary light-induced photochemical processes of PSII. PSII is a light-driven water:plastoquinone oxidoreductase, using light energy to abstract electrons from H(2)O, generating O(2) and a proton gradient subsequently used for ATP formation. The sequence is that of Photosystem II CP43 reaction center protein from Stigeoclonium helveticum (Green alga).